The sequence spans 672 residues: Acetoacetyl-CoA synthetase (672 aa).

The protein belongs to the ATP-dependent AMP-binding enzyme family.

The protein localises to the cytoplasm. The protein resides in the cytosol. It carries out the reaction acetoacetate + ATP + CoA = acetoacetyl-CoA + AMP + diphosphate. Its function is as follows. Activates acetoacetate to acetoacetyl-CoA. This is Acetoacetyl-CoA synthetase (aacs) from Xenopus tropicalis (Western clawed frog).